The sequence spans 172 residues: Shikimate kinase (172 aa).

Position 11–16 (11–16 (GAGKST)) interacts with ATP. Ser-15 contacts Mg(2+). The substrate site is built by Asp-33, Arg-57, and Gly-79. Arg-117 contributes to the ATP binding site. Substrate is bound at residue Arg-136. Arg-153 lines the ATP pocket.

Belongs to the shikimate kinase family. As to quaternary structure, monomer. Mg(2+) is required as a cofactor.

It localises to the cytoplasm. The enzyme catalyses shikimate + ATP = 3-phosphoshikimate + ADP + H(+). Its pathway is metabolic intermediate biosynthesis; chorismate biosynthesis; chorismate from D-erythrose 4-phosphate and phosphoenolpyruvate: step 5/7. Catalyzes the specific phosphorylation of the 3-hydroxyl group of shikimic acid using ATP as a cosubstrate. The polypeptide is Shikimate kinase (Pseudomonas syringae pv. syringae (strain B728a)).